The sequence spans 141 residues: uncharacterized protein (141 aa).

Residues 13-141 (VTKGTELEKE…LKGILDRYFK (129 aa)) form the Ferritin-like diiron domain. Positions 63, 66, 125, and 128 each coordinate Fe cation.

This is an uncharacterized protein from Methanocaldococcus jannaschii (strain ATCC 43067 / DSM 2661 / JAL-1 / JCM 10045 / NBRC 100440) (Methanococcus jannaschii).